The following is a 291-amino-acid chain: Small ribosomal subunit biogenesis GTPase RsgA (291 aa).

The 159-residue stretch at 63–221 (QNELKRPPVS…VADTPGFSAL (159 aa)) folds into the CP-type G domain. Residues 112–115 (TKKD) and 164–172 (GQSGVGKST) contribute to the GTP site. Residues Cys-245, Cys-250, His-252, and Cys-258 each contribute to the Zn(2+) site.

It belongs to the TRAFAC class YlqF/YawG GTPase family. RsgA subfamily. In terms of assembly, monomer. Associates with 30S ribosomal subunit, binds 16S rRNA. Zn(2+) serves as cofactor.

The protein resides in the cytoplasm. Functionally, one of several proteins that assist in the late maturation steps of the functional core of the 30S ribosomal subunit. Helps release RbfA from mature subunits. May play a role in the assembly of ribosomal proteins into the subunit. Circularly permuted GTPase that catalyzes slow GTP hydrolysis, GTPase activity is stimulated by the 30S ribosomal subunit. This Staphylococcus carnosus (strain TM300) protein is Small ribosomal subunit biogenesis GTPase RsgA.